The chain runs to 256 residues: Calsenilin (256 aa).

The disordered stretch occupies residues 1–22 (MQRTKEAMKASDGSLLGDPGRI). At Ser-14 the chain carries Phosphoserine. A Glycyl lysine isopeptide (Lys-Gly) (interchain with G-Cter in SUMO1) cross-link involves residue Lys-26. Residues Cys-45 and Cys-46 are each lipidated (S-palmitoyl cysteine). 2 positions are modified to phosphoserine: Ser-60 and Ser-63. Residues 67–123 (LELSTVRHQPEGLDQLQAQTKFTKKELQSLYRGFKNECPTGLVDEDTFKLIYSQFFP) enclose the EF-hand 1; degenerate domain. A Glycyl lysine isopeptide (Lys-Gly) (interchain with G-Cter in SUMO1) cross-link involves residue Lys-90. 3 EF-hand domains span residues 126-161 (DATT…LLRG), 162-197 (TVHE…IYDM), and 210-245 (APLE…DENI). The Ca(2+) site is built by Asp-175, Asn-177, Asp-179, Tyr-181, Glu-186, Asp-223, Asn-225, Asp-227, and Glu-234. Positions 243 to 256 (ENIMSSMQLFENVI) are interaction with KCND2.

Belongs to the recoverin family. Binds to DNA as a homomultimer. Dimerization is induced by binding to calcium. Interacts with the C-terminus of PSEN1 and PSEN2 and with PSEN2 CTF subunit. Associates with KCN1. Component of heteromultimeric potassium channels. Identified in potassium channel complexes containing KCND1, KCND2, KCND3, KCNIP1, KCNIP2, KCNIP3, KCNIP4, DPP6 and DPP10. Interacts with KCND2 and KCND3. Palmitoylated. Palmitoylation enhances association with the plasma membrane. In terms of processing, proteolytically cleaved by caspase-3. In terms of tissue distribution, detected in brain cortex, thalamus, dentate gyrus and cerebellum (at protein level). Expressed in brain. Colocalizes with KCND2 in excitatory neurons including cortical and hippocampal CA1 pyramidal cells.

The protein resides in the cytoplasm. It is found in the cell membrane. It localises to the endoplasmic reticulum. The protein localises to the golgi apparatus. Its subcellular location is the nucleus. In terms of biological role, calcium-dependent transcriptional repressor that binds to the DRE element of genes including PDYN and FOS. Affinity for DNA is reduced upon binding to calcium and enhanced by binding to magnesium. Seems to be involved in nociception. Regulatory subunit of Kv4/D (Shal)-type voltage-gated rapidly inactivating A-type potassium channels, such as KCND2/Kv4.2 and KCND3/Kv4.3. Modulates channel expression at the cell membrane, gating characteristics, inactivation kinetics and rate of recovery from inactivation in a calcium-dependent and isoform-specific manner. Its function is as follows. May play a role in the regulation of PSEN2 proteolytic processing and apoptosis. Together with PSEN2 involved in modulation of amyloid-beta formation. The sequence is that of Calsenilin (Kcnip3) from Rattus norvegicus (Rat).